The following is a 137-amino-acid chain: Drosulfakinins (137 aa).

A signal peptide spans 1–31 (MGLRSCTHFATLVIPLWALAFCFLVVVPVPA). Residues 32–74 (QTNLQTSKGDRRLQDLESNMGAESDQPNANLVRPSLSRFGDKR) constitute a propeptide that is removed on maturation. A Phenylalanine amide modification is found at Phe-81. Positions 85–107 (VPRPMIPIELDLLMDNDDENTKA) are excised as a propeptide. Tyr-113 is modified (sulfotyrosine). A Phenylalanine amide modification is found at Phe-118. Tyr-130 bears the Sulfotyrosine mark. Phe-135 carries the post-translational modification Phenylalanine amide.

It belongs to the gastrin/cholecystokinin family.

The protein localises to the secreted. Drosulfakinin-0 (DSK 0) plays diverse biological roles including regulating gut muscle contraction in adults but not in larvae. In Drosophila yakuba (Fruit fly), this protein is Drosulfakinins.